Here is a 301-residue protein sequence, read N- to C-terminus: UDP-N-acetylenolpyruvoylglucosamine reductase 1 (301 aa).

Residues 29 to 196 (KIGGPADILI…LEAVFQLQAG (168 aa)) enclose the FAD-binding PCMH-type domain. Arg-174 is an active-site residue. The active-site Proton donor is the Ser-225. Residue Glu-295 is part of the active site.

Belongs to the MurB family. FAD serves as cofactor.

It localises to the cytoplasm. The catalysed reaction is UDP-N-acetyl-alpha-D-muramate + NADP(+) = UDP-N-acetyl-3-O-(1-carboxyvinyl)-alpha-D-glucosamine + NADPH + H(+). It functions in the pathway cell wall biogenesis; peptidoglycan biosynthesis. Its function is as follows. Cell wall formation. The protein is UDP-N-acetylenolpyruvoylglucosamine reductase 1 (murB1) of Bacillus cereus (strain ATCC 14579 / DSM 31 / CCUG 7414 / JCM 2152 / NBRC 15305 / NCIMB 9373 / NCTC 2599 / NRRL B-3711).